The primary structure comprises 570 residues: uncharacterized protein (570 aa).

The span at 1 to 15 (MTESIISSRTASISS) shows a compositional bias: low complexity. The interval 1–34 (MTESIISSRTASISSKEGYEIRQGSTDSSSLDLE) is disordered. Ser14 is subject to Phosphoserine. 12 helical membrane passes run 96–116 (WKLY…LFIG), 141–161 (NLNT…HYIM), 163–183 (TFPL…IVFL), 198–218 (FFLG…MGMF), 229–249 (PVFW…AYGL), 261–281 (LFMI…FFYY), 328–348 (PITW…NLAY), 369–389 (VALA…MYLI), 397–417 (AMFW…LPWS), 423–443 (LATM…LGWT), 457–477 (GLMF…LWQS), and 485–505 (PAWI…YLVA).

The protein belongs to the major facilitator superfamily. Allantoate permease family.

The protein resides in the endoplasmic reticulum. The protein localises to the membrane. This is an uncharacterized protein from Schizosaccharomyces pombe (strain 972 / ATCC 24843) (Fission yeast).